A 278-amino-acid polypeptide reads, in one-letter code: Sulfur carrier protein FdhD (278 aa).

C113 serves as the catalytic Cysteine persulfide intermediate. 251–256 (FCRNGR) lines the Mo-bis(molybdopterin guanine dinucleotide) pocket.

This sequence belongs to the FdhD family.

Its subcellular location is the cytoplasm. Required for formate dehydrogenase (FDH) activity. Acts as a sulfur carrier protein that transfers sulfur from IscS to the molybdenum cofactor prior to its insertion into FDH. The chain is Sulfur carrier protein FdhD from Shewanella oneidensis (strain ATCC 700550 / JCM 31522 / CIP 106686 / LMG 19005 / NCIMB 14063 / MR-1).